The following is a 60-amino-acid chain: Large ribosomal subunit protein uL30 (60 aa).

The protein belongs to the universal ribosomal protein uL30 family. In terms of assembly, part of the 50S ribosomal subunit.

The sequence is that of Large ribosomal subunit protein uL30 from Streptococcus gordonii (strain Challis / ATCC 35105 / BCRC 15272 / CH1 / DL1 / V288).